The following is a 360-amino-acid chain: Phenylalanine--tRNA ligase alpha subunit (360 aa).

Glu260 provides a ligand contact to Mg(2+).

Belongs to the class-II aminoacyl-tRNA synthetase family. Phe-tRNA synthetase alpha subunit type 1 subfamily. Tetramer of two alpha and two beta subunits. The cofactor is Mg(2+).

The protein localises to the cytoplasm. It catalyses the reaction tRNA(Phe) + L-phenylalanine + ATP = L-phenylalanyl-tRNA(Phe) + AMP + diphosphate + H(+). This chain is Phenylalanine--tRNA ligase alpha subunit, found in Methylobacterium sp. (strain 4-46).